Consider the following 258-residue polypeptide: Spindlin-2B (258 aa).

Over residues 1–23 (MKTPNAQEAEGQQTRAAAGRATG) the composition is skewed to low complexity. Positions 1 to 49 (MKTPNAQEAEGQQTRAAAGRATGSANMTKKKVSQKKQRGRPSSQPRRNI) are disordered. The span at 28–39 (TKKKVSQKKQRG) shows a compositional bias: basic residues. Tudor-like domain regions lie at residues 50–99 (VGCR…LELH), 129–178 (IGKA…YQLL), and 210–255 (IGKH…YDLV). Histone H3K4me3 and H3R8me2a binding regions lie at residues E138 and 246-248 (DFH).

Belongs to the SPIN/STSY family. Interacts with C11orf84/SPINDOC. In terms of tissue distribution, detected in all the examined tissues with highest expression in liver, followed by heart, stomach, kidney, skeletal muscle, placenta, and pancreas.

Its subcellular location is the nucleus. In terms of biological role, involved in the regulation of cell cycle progression, this activity is related to the inhibition of apoptosis following the removal of essential growth factors. Exhibits H3K4me3-binding activity. The protein is Spindlin-2B (SPIN2B) of Homo sapiens (Human).